A 181-amino-acid polypeptide reads, in one-letter code: UPF0302 protein LMHCC_0635 (181 aa).

This sequence belongs to the UPF0302 family.

The polypeptide is UPF0302 protein LMHCC_0635 (Listeria monocytogenes serotype 4a (strain HCC23)).